A 221-amino-acid chain; its full sequence is UPF0502 protein PLES_16071 (221 aa).

This sequence belongs to the UPF0502 family.

The protein is UPF0502 protein PLES_16071 of Pseudomonas aeruginosa (strain LESB58).